A 197-amino-acid chain; its full sequence is Negative modulator of initiation of replication (197 aa).

Interaction with DNA regions lie at residues 100–101 (AV), 129–133 (RTRVY), and 163–169 (NTNSGRK).

The protein belongs to the SeqA family. In terms of assembly, homodimer. Polymerizes to form helical filaments.

The protein resides in the cytoplasm. Negative regulator of replication initiation, which contributes to regulation of DNA replication and ensures that replication initiation occurs exactly once per chromosome per cell cycle. Binds to pairs of hemimethylated GATC sequences in the oriC region, thus preventing assembly of replication proteins and re-initiation at newly replicated origins. Repression is relieved when the region becomes fully methylated. This is Negative modulator of initiation of replication from Haemophilus influenzae (strain ATCC 51907 / DSM 11121 / KW20 / Rd).